A 252-amino-acid chain; its full sequence is Hydroxyacylglutathione hydrolase (252 aa).

H54, H56, D58, H59, H113, D132, and H170 together coordinate Zn(2+).

Belongs to the metallo-beta-lactamase superfamily. Glyoxalase II family. In terms of assembly, monomer. The cofactor is Zn(2+).

It carries out the reaction an S-(2-hydroxyacyl)glutathione + H2O = a 2-hydroxy carboxylate + glutathione + H(+). The protein operates within secondary metabolite metabolism; methylglyoxal degradation; (R)-lactate from methylglyoxal: step 2/2. Its function is as follows. Thiolesterase that catalyzes the hydrolysis of S-D-lactoyl-glutathione to form glutathione and D-lactic acid. This chain is Hydroxyacylglutathione hydrolase, found in Synechococcus sp. (strain JA-3-3Ab) (Cyanobacteria bacterium Yellowstone A-Prime).